A 409-amino-acid polypeptide reads, in one-letter code: MASVGIEPSAAVRESTGNVTDADRLPEEMKDMKIQDDKEMEATIVNGNVTETGHIIVTTIGGRNGQPKQTISYMAERVVGHGSFGVVFQAKCLETGETVAIKKVLQDRRYKNRELQTMRLLDHPNVVSLKHCFFSTTEKDELYLNLVLEYVPETVHRVIKHYNKLNQRMPLVYVKLYTYQIFRSLSYIHRCIGVCHRDIKPQNLLVNPHTHQVKLCDFGSAKVLVKGEPNISYICSRYYRAPELIFGATEYTTAIDVWSAGCVLAELLLGQPLFPGESGVDQLVEIIKVLGTPTREEIKCMNPNYTEFKFPQIKAHPWHKIFHKRMPPEAVDLVSRLLQYSPNLRCAALDSLVHPFFDELRDPNARLPNGRFLPPLFNFKPHELKGVPVEMVAKLVPEHARKQCPWLSL.

Position 2 is an N-acetylalanine (Ala-2). The 285-residue stretch at 73–357 (YMAERVVGHG…ALDSLVHPFF (285 aa)) folds into the Protein kinase domain. ATP contacts are provided by residues 79–87 (VGHGSFGVV) and Lys-102. The active-site Proton acceptor is the Asp-198. The residue at position 233 (Tyr-233) is a Phosphotyrosine.

This sequence belongs to the protein kinase superfamily. CMGC Ser/Thr protein kinase family. GSK-3 subfamily. In terms of assembly, binds to KIB1. Component of a complex made of POLAR, BASL, ASK7/BIN2 and ASK3/SK12. Binds to POLAR and BASL. In terms of processing, autophosphorylated mainly on threonine and serine residues. As to expression, roots, shoots and leaves.

It is found in the cytoplasm. Its subcellular location is the cell cortex. It carries out the reaction L-seryl-[protein] + ATP = O-phospho-L-seryl-[protein] + ADP + H(+). It catalyses the reaction L-threonyl-[protein] + ATP = O-phospho-L-threonyl-[protein] + ADP + H(+). May mediate extracellular signals to regulate transcription in differentiating cells. Probably involved first at the cortical polarity site, to restrict MAPK signaling and promote asymmetric cell division (ACD), and second in the nucleus of stomatal lineage ground cells (SLGCs) or meristemoids, to limit cell division and to promote differentiation into pavement or stomatal guard cells, respectively. Phosphorylate YDA and SPCH in vitro. The chain is Shaggy-related protein kinase gamma from Arabidopsis thaliana (Mouse-ear cress).